Here is a 325-residue protein sequence, read N- to C-terminus: Forkhead box protein B1 (325 aa).

Residues 12–103 (QKPPYSYISL…GDMFENGSFL (92 aa)) constitute a DNA-binding region (fork-head). The segment covering 284–309 (LSNSPPSLSPTSSQTATSQSSPATPS) has biased composition (low complexity). A disordered region spans residues 284 to 325 (LSNSPPSLSPTSSQTATSQSSPATPSETLTSPASALHSVAVH).

The protein resides in the nucleus. Functionally, transcription factor expressed by neural progenitor cells in specific regions of the embryonic neuroepithelium. Essential for the mammillary nuclei maintenance. Negatively regulates the proliferation of oligodendrocyte progenitors and promotes oligodendrocyte maturation. Also expressed in mammary glands, plays a role in lactation, controls development of mammary glands and the inferior colliculi of the midbrain in the central nervous system that regulates the milk-ejection reflex. This is Forkhead box protein B1 (FOXB1) from Homo sapiens (Human).